The following is a 359-amino-acid chain: MAAEGKNVLIMAGGTGGHVFPALACAREFQKRGYSVHWLGTPRGIENELVPQAGLPLHLIQVSGLRGKGKLSLLKAPFTLVKAVLQARRIIRQLKPVCVLGFGGYVTGPGGVAARLCGVPLVIHEQNARAGTANRLLVPLSARVCEAFPNTFEASDKRRTTGNPVRPELFMDAQRVPLGERRARLLVLGGSLGAEPLNKLLPKALSEVPAALRPEVFHQAGKQHAPITAERYHEVGVEAQVEPFINDMAQAYGWADLVVCRAGALTVSELAAAGLPSMLVPLPHAIDDHQTHNAQYLAREGAAFLMPQATTGAAQLAERLNEVLMQPEKLNVMAGTARRLAKPAATSTVVDICLEVAHG.

UDP-N-acetyl-alpha-D-glucosamine-binding positions include 15 to 17 (TGG), Asn127, Arg166, Ser191, Ile245, 264 to 269 (ALTVSE), and Gln290.

The protein belongs to the glycosyltransferase 28 family. MurG subfamily.

It localises to the cell inner membrane. It catalyses the reaction di-trans,octa-cis-undecaprenyl diphospho-N-acetyl-alpha-D-muramoyl-L-alanyl-D-glutamyl-meso-2,6-diaminopimeloyl-D-alanyl-D-alanine + UDP-N-acetyl-alpha-D-glucosamine = di-trans,octa-cis-undecaprenyl diphospho-[N-acetyl-alpha-D-glucosaminyl-(1-&gt;4)]-N-acetyl-alpha-D-muramoyl-L-alanyl-D-glutamyl-meso-2,6-diaminopimeloyl-D-alanyl-D-alanine + UDP + H(+). The protein operates within cell wall biogenesis; peptidoglycan biosynthesis. In terms of biological role, cell wall formation. Catalyzes the transfer of a GlcNAc subunit on undecaprenyl-pyrophosphoryl-MurNAc-pentapeptide (lipid intermediate I) to form undecaprenyl-pyrophosphoryl-MurNAc-(pentapeptide)GlcNAc (lipid intermediate II). In Pseudomonas putida (strain ATCC 700007 / DSM 6899 / JCM 31910 / BCRC 17059 / LMG 24140 / F1), this protein is UDP-N-acetylglucosamine--N-acetylmuramyl-(pentapeptide) pyrophosphoryl-undecaprenol N-acetylglucosamine transferase.